A 31-amino-acid polypeptide reads, in one-letter code: Chymotrypsin (31 aa).

The 31-residue stretch at 1-31 (IVGGVEAVPGVWPYQAALFIIDMYFCGGSLI) folds into the Peptidase S1 domain.

This sequence belongs to the peptidase S1 family.

The protein localises to the secreted. It is found in the extracellular space. The enzyme catalyses Preferential cleavage: Tyr-|-Xaa, Trp-|-Xaa, Phe-|-Xaa, Leu-|-Xaa.. The sequence is that of Chymotrypsin from Penaeus monodon (Giant tiger prawn).